The sequence spans 814 residues: Transcription factor oryO (814 aa).

2 disordered regions span residues 1–59 (MTAR…PACN) and 699–723 (PMDGSSTGLSDRTPPSESELSSIPP). Polar residues-rich tracts occupy residues 16–27 (ANPTVRDQTQQD) and 49–59 (QPDNTSSPACN). Residues 58-85 (CNQCRTRKIRCDRQQPKCSNCRRADVEC) constitute a DNA-binding region (zn(2)-C6 fungal-type). Low complexity predominate over residues 713–723 (PSESELSSIPP).

It localises to the nucleus. In terms of biological role, transcription factor that regulates the expression of the gene cluster that mediates the biosynthesis of oryzines, natural products with an unusual maleidride backbone. The chain is Transcription factor oryO from Aspergillus oryzae (strain ATCC 42149 / RIB 40) (Yellow koji mold).